The following is a 1307-amino-acid chain: Histone-lysine N-methyltransferase SETDB1 (1307 aa).

Residues 30 to 65 (VEELGISMEELRQYIDEELEKMDCIQQRKKQLAELE) adopt a coiled-coil conformation. Residues serine 112 and serine 117 each carry the phosphoserine modification. Phosphothreonine is present on threonine 120. The disordered stretch occupies residues 127–148 (DEDDDVLSIDSGDAGSRTPKDQ). A Glycyl lysine isopeptide (Lys-Gly) (interchain with G-Cter in SUMO2); alternate cross-link involves residue lysine 182. Lysine 182 is covalently cross-linked (Glycyl lysine isopeptide (Lys-Gly) (interchain with G-Cter in ubiquitin); alternate). 2 consecutive Tudor domains span residues 257–320 (KLFV…LKKT) and 347–403 (LLKS…SMKT). Disordered stretches follow at residues 404–424 (SSAS…PNMG), 444–512 (IQFK…TLSE), and 531–570 (SVTS…AFHG). The segment covering 454 to 467 (PIAPPAPLPIPPLS) has biased composition (pro residues). Positions 476 to 494 (ESQLAQSRKQVAKKSTSFR) are enriched in polar residues. Residues 495 to 512 (PGSVGSGHSSPTSSTLSE) are compositionally biased toward low complexity. The span at 539 to 565 (AAPPVPPVPPGPPTPPGPPAPPGPLAP) shows a compositional bias: pro residues. Residues 611-682 (YRGKNPLLVP…EMFCLDPYVL (72 aa)) form the MBD domain. The Pre-SET domain maps to 744-817 (VGCDCKDGCR…MCTNRLVQHG (74 aa)). Residues cysteine 746, cysteine 748, cysteine 752, cysteine 758, cysteine 760, cysteine 798, cysteine 802, cysteine 804, and cysteine 809 each coordinate Zn(2+). The region spanning 820–1282 (VRLQLFKTQN…AGTELTWDYN (463 aa)) is the SET domain. S-adenosyl-L-methionine is bound by residues 830 to 832 (KGW), aspartate 868, and tyrosine 870. A Glycyl lysine isopeptide (Lys-Gly) (interchain with G-Cter in ubiquitin) cross-link involves residue lysine 884. Residues 885 to 1174 (EGYESDVPTS…KNLSGPTKRQ (290 aa)) form a disordered region. The segment covering 913 to 924 (EDPEESNDDSSD) has biased composition (acidic residues). Residues 950-966 (GQKENELSEMTSKDSRP) show a composition bias toward basic and acidic residues. The residue at position 1042 (serine 1042) is a Phosphoserine. Over residues 1048 to 1066 (FKDEGDNKQPKKEDPENRN) the composition is skewed to basic and acidic residues. Lysine 1049 is covalently cross-linked (Glycyl lysine isopeptide (Lys-Gly) (interchain with G-Cter in SUMO2); alternate). Lysine 1049 participates in a covalent cross-link: Glycyl lysine isopeptide (Lys-Gly) (interchain with G-Cter in SUMO1); alternate. Glycyl lysine isopeptide (Lys-Gly) (interchain with G-Cter in SUMO2) cross-links involve residues lysine 1055 and lysine 1085. Residues 1097-1112 (SVLQSQRVVTSTQSNP) are compositionally biased toward polar residues. Residues 1116–1131 (LTLSSSTESEGESGTS) show a composition bias toward low complexity. Over residues 1137-1156 (GHTSATAVDSDDIQTISSGS) the composition is skewed to polar residues. Lysine 1165 is covalently cross-linked (Glycyl lysine isopeptide (Lys-Gly) (interchain with G-Cter in SUMO2)). N6,N6,N6-trimethyllysine; alternate occurs at positions 1186 and 1194. Residues lysine 1186 and lysine 1194 each carry the N6,N6-dimethyllysine; alternate modification. S-adenosyl-L-methionine-binding positions include arginine 1236 and 1239-1240 (NH). Positions 1242, 1295, 1297, and 1302 each coordinate Zn(2+). Residues 1291–1307 (KELLCCCGAIECRGRLL) form the Post-SET domain.

It belongs to the class V-like SAM-binding methyltransferase superfamily. Histone-lysine methyltransferase family. Suvar3-9 subfamily. In terms of assembly, part of a complex containing at least CDYL, REST, WIZ, SETDB1, EHMT1 and EHMT2. Forms a complex with ATRX, TRIM28 and ZNF274. Probably part of a corepressor complex containing ZNF304, TRIM28, SETDB1 and DNMT1. Interacts with TRIM28/TIF1B. Interacts with ATF7IP and ATF7IP2; the interaction with ATF7IP is required to stimulate histone methyltransferase activity and facilitate the conversion of dimethylated to trimethylated H3 'Lys-9'. Interacts with MBD1; interaction is abolished when MBD1 is sumoylated. Interacts with CBX1 and CBX5. Interacts with DNMT3A and DNMT3B. Interacts with SUMO2. Interacts with MPHOSPH8. Interacts with ERG. Interacts with HDAC1, HDAC2, SIN3A, SIN3B. Interacts with ATRX. Interacts with RESF1. Interacts with ZNF638. Interacts with TASOR. Interacts with ZNF263; recruited to the SIX3 promoter along with other proteins involved in chromatin modification and transcriptional corepression where it contributes to transcriptional repression. Interacts with PHF13; the interaction probably enhances SETDB1 chromatin-associated levels and activity. Interacts with VRK1. Degraded by the proteasome, shielded by interaction with ATF7IP. In terms of processing, monoubiquitinated at Lys-884 by E2 enzymes UBE2E family. The conjugated-Ub is protected from deubiquitination through the SET domain. Monoubiquitination at Lys-884 is required for catalytic activity and H3K9 methylation and endogenous retrovirus silencing. In terms of tissue distribution, ubiquitously expressed. Strong expression in liver and testis. Expressed in the brain, lungs, kidneys, uterus and seminal vesicles.

The protein resides in the nucleus. It localises to the chromosome. The enzyme catalyses N(6),N(6)-dimethyl-L-lysyl(9)-[histone H3] + S-adenosyl-L-methionine = N(6),N(6),N(6)-trimethyl-L-lysyl(9)-[histone H3] + S-adenosyl-L-homocysteine + H(+). Histone methyltransferase that specifically trimethylates 'Lys-9' of histone H3. H3 'Lys-9' trimethylation represents a specific tag for epigenetic transcriptional repression by recruiting HP1 (CBX1, CBX3 and/or CBX5) proteins to methylated histones. Mainly functions in euchromatin regions, thereby playing a central role in the silencing of euchromatic genes. H3 'Lys-9' trimethylation is coordinated with DNA methylation. Probably forms a complex with MBD1 and ATF7IP that represses transcription and couples DNA methylation and histone 'Lys-9' trimethylation. Its activity is dependent on MBD1 and is heritably maintained through DNA replication by being recruited by CAF-1. SETDB1 is targeted to histone H3 by TRIM28/TIF1B, a factor recruited by KRAB zinc-finger proteins. Probably forms a corepressor complex required for activated KRAS-mediated promoter hypermethylation and transcriptional silencing of tumor suppressor genes (TSGs) or other tumor-related genes in colorectal cancer (CRC) cells. Required to maintain a transcriptionally repressive state of genes in undifferentiated embryonic stem cells (ESCs). In ESCs, in collaboration with TRIM28, is also required for H3K9me3 and silencing of endogenous and introduced retroviruses in a DNA-methylation independent-pathway. Associates at promoter regions of tumor suppressor genes (TSGs) leading to their gene silencing. The SETDB1-TRIM28-ZNF274 complex may play a role in recruiting ATRX to the 3'-exons of zinc-finger coding genes with atypical chromatin signatures to establish or maintain/protect H3K9me3 at these transcriptionally active regions. The chain is Histone-lysine N-methyltransferase SETDB1 from Mus musculus (Mouse).